Reading from the N-terminus, the 292-residue chain is 4-hydroxy-tetrahydrodipicolinate synthase (292 aa).

T48 contacts pyruvate. The active-site Proton donor/acceptor is Y136. The active-site Schiff-base intermediate with substrate is K164. I204 is a pyruvate binding site.

Belongs to the DapA family. As to quaternary structure, homotetramer; dimer of dimers.

The protein localises to the cytoplasm. The enzyme catalyses L-aspartate 4-semialdehyde + pyruvate = (2S,4S)-4-hydroxy-2,3,4,5-tetrahydrodipicolinate + H2O + H(+). It participates in amino-acid biosynthesis; L-lysine biosynthesis via DAP pathway; (S)-tetrahydrodipicolinate from L-aspartate: step 3/4. Catalyzes the condensation of (S)-aspartate-beta-semialdehyde [(S)-ASA] and pyruvate to 4-hydroxy-tetrahydrodipicolinate (HTPA). The polypeptide is 4-hydroxy-tetrahydrodipicolinate synthase (Acetivibrio thermocellus (strain ATCC 27405 / DSM 1237 / JCM 9322 / NBRC 103400 / NCIMB 10682 / NRRL B-4536 / VPI 7372) (Clostridium thermocellum)).